Consider the following 90-residue polypeptide: Small ribosomal subunit protein bS18 (90 aa).

This sequence belongs to the bacterial ribosomal protein bS18 family. In terms of assembly, part of the 30S ribosomal subunit. Forms a tight heterodimer with protein bS6.

Its function is as follows. Binds as a heterodimer with protein bS6 to the central domain of the 16S rRNA, where it helps stabilize the platform of the 30S subunit. The polypeptide is Small ribosomal subunit protein bS18 (Polynucleobacter asymbioticus (strain DSM 18221 / CIP 109841 / QLW-P1DMWA-1) (Polynucleobacter necessarius subsp. asymbioticus)).